The chain runs to 313 residues: Protein phosphatase PTC7 homolog fig (313 aa).

Positions lysine 47–leucine 307 constitute a PPM-type phosphatase domain. Mn(2+) is bound by residues aspartate 83, glycine 84, and aspartate 229.

The protein belongs to the PP2C family. It depends on Mg(2+) as a cofactor. Mn(2+) is required as a cofactor.

The enzyme catalyses O-phospho-L-seryl-[protein] + H2O = L-seryl-[protein] + phosphate. The catalysed reaction is O-phospho-L-threonyl-[protein] + H2O = L-threonyl-[protein] + phosphate. This is Protein phosphatase PTC7 homolog fig from Drosophila virilis (Fruit fly).